Consider the following 313-residue polypeptide: Glucosyl-dolichyl phosphate glucuronosyltransferase (313 aa).

Residues 284-304 (LIAIFVFTAAVGFGYVYGLLT) form a helical membrane-spanning segment.

The protein belongs to the glycosyltransferase 2 family.

It is found in the cell membrane. It carries out the reaction an archaeal dolichyl alpha-D-glucosyl phosphate + UDP-alpha-D-glucuronate = an archaeal dolichyl beta-D-glucuronosyl-(1-&gt;4)-alpha-D-glucosyl phosphate + UDP + H(+). The protein operates within cell surface structure biogenesis; S-layer biogenesis. Involved in the protein N-glycosylation pathway responsible for the assembly and attachment of an N-linked pentasaccharide that decorates the S-layer glycoprotein and flagellins. Catalyzes the transfer of a glucuronate residue (GlcA) to a glucose residue already bound to a dolichol phosphate (DolP), a compound that serves as a glycan lipid carrier in Archaea. In vitro, is able to add GlcA to DolP-Glc in which the omega-position isoprene is not saturated. However, the likely physiological lipid substrate is alpha,omega-saturated. The sequence is that of Glucosyl-dolichyl phosphate glucuronosyltransferase from Haloferax volcanii (strain ATCC 29605 / DSM 3757 / JCM 8879 / NBRC 14742 / NCIMB 2012 / VKM B-1768 / DS2) (Halobacterium volcanii).